Here is a 1953-residue protein sequence, read N- to C-terminus: Protein BNI1 (1953 aa).

Disordered regions lie at residues 1-152 (MLKN…ASSL), 230-258 (MRAN…ANSS), 263-282 (KSVL…SNSL), and 287-306 (TLSS…SGSL). A compositionally biased stretch (low complexity) spans 31-40 (ANSNATNSNT). Polar residues-rich tracts occupy residues 41 to 100 (GSPT…SQYM) and 110 to 143 (VSSQ…RQHT). Residues 174–696 (EMPSDPYEVE…NVSVASTSDE (523 aa)) enclose the GBD/FH3 domain. Residues 232 to 246 (ANTTSSSTASRTSMA) show a composition bias toward low complexity. The span at 263–278 (KSVLMTSASSPTSTVY) shows a compositional bias: polar residues. Residues S311 and S325 each carry the phosphoserine modification. Residues 312 to 337 (LNNIYRGGAENNTSASTLPGDRTNRP) form a disordered region. Coiled coils occupy residues 712-807 (QTDE…TILN), 864-894 (NKRL…EFEK), and 928-981 (NKLN…YKGF). 3 disordered regions span residues 990 to 1014 (IMDS…SLDP), 1040 to 1094 (HEIQ…LDAL), and 1149 to 1330 (TQKV…MPAS). The region spanning 1053-1337 (SSSSSDDESE…PASQIKSAVT (285 aa)) is the FH1 domain. S1085 and S1170 each carry phosphoserine. Residues 1184–1211 (DKAEKDMRQHVENGKQGRVVNHEEDKTA) show a composition bias toward basic and acidic residues. Polar residues predominate over residues 1217 to 1237 (SKLNNTDGAEDLSTQSSVLSS). The span at 1238–1250 (QPPPPPPPPPPVP) shows a compositional bias: pro residues. A compositionally biased stretch (basic and acidic residues) spans 1257 to 1270 (SLEKEKKSEDDTVK). The span at 1278–1292 (PAPPPPPPPPPPPPM) shows a compositional bias: pro residues. A phosphoserine mark is found at S1338 and S1344. The FH2 domain occupies 1348–1766 (FEKYPRPHKK…YIKHKKIVEE (419 aa)). Residues 1732-1811 (KFADFINEYK…DKLLEQLKNA (80 aa)) are a coiled coil. A compositionally biased stretch (basic and acidic residues) spans 1768 to 1779 (QKRAQEKEKQKE). 3 disordered regions span residues 1768 to 1797 (QKRA…AEDR), 1809 to 1844 (KNAG…LLND), and 1872 to 1899 (PTPL…LEDQ). The 35-residue stretch at 1792–1826 (DEAEDRRAVMDKLLEQLKNAGPAKSDPSSARKRAL) folds into the DAD domain. Over residues 1821 to 1830 (ARKRALVRKK) the composition is skewed to basic residues. A compositionally biased stretch (polar residues) spans 1880–1896 (VMNTSEDLPSPSKTSAL). At T1918 the chain carries Phosphothreonine.

The protein belongs to the formin homology family. BNI1 subfamily. As to quaternary structure, homodimer, and possibly also homotetramer. Interacts with PFY1 via the FH1 domain and with actin via the FH2 domain.

The protein resides in the cell membrane. It localises to the cell projection. The protein localises to the ruffle membrane. Its subcellular location is the cytoplasm. It is found in the cytoskeleton. Required for the assembly of F-actin structures, such as actin cables and stress fibers. Nucleates actin filaments. Binds to the barbed end of the actin filament and acts as a leaky capper, slowing both polymerization and depolymerization. Protects the growing actin fiber from tight capping proteins and so increases the time of elongation and the total amount of F-actin. May organize microtubules by mediating spindle positioning and movement in the budding process. Potential target of the RHO family members. The protein is Protein BNI1 (BNI1) of Saccharomyces cerevisiae (strain ATCC 204508 / S288c) (Baker's yeast).